The chain runs to 444 residues: Tol-Pal system protein TolB (444 aa).

A signal peptide spans 1–18 (MRNIIYFILLLFSCTGYA).

Belongs to the TolB family. As to quaternary structure, the Tol-Pal system is composed of five core proteins: the inner membrane proteins TolA, TolQ and TolR, the periplasmic protein TolB and the outer membrane protein Pal. They form a network linking the inner and outer membranes and the peptidoglycan layer.

The protein localises to the periplasm. Functionally, part of the Tol-Pal system, which plays a role in outer membrane invagination during cell division and is important for maintaining outer membrane integrity. In Rickettsia canadensis (strain McKiel), this protein is Tol-Pal system protein TolB.